Reading from the N-terminus, the 101-residue chain is Large ribosomal subunit protein uL24 (101 aa).

This sequence belongs to the universal ribosomal protein uL24 family. Part of the 50S ribosomal subunit.

One of two assembly initiator proteins, it binds directly to the 5'-end of the 23S rRNA, where it nucleates assembly of the 50S subunit. Functionally, one of the proteins that surrounds the polypeptide exit tunnel on the outside of the subunit. This is Large ribosomal subunit protein uL24 from Elusimicrobium minutum (strain Pei191).